Consider the following 348-residue polypeptide: Cyclin-dependent kinase inhibitor 1C (348 aa).

Arginine 109 carries the post-translational modification Omega-N-methylarginine. The segment at 115–348 (VAVIPRSGPP…VEQTPRKRLR (234 aa)) is disordered. 2 stretches are compositionally biased toward acidic residues: residues 207-220 (QGEE…DELG) and 227-274 (QGEE…QDEN). A compositionally biased stretch (basic and acidic residues) spans 275-284 (QEQRGQELKD). The short motif at 309–312 (KRKR) is the Nuclear localization signal element.

It belongs to the CDI family. Interacts with PCNA. Expressed in the heart, brain, lung, skeletal muscle, kidney, pancreas and testis. High levels are seen in the placenta while low levels are seen in the liver.

Its subcellular location is the nucleus. Potent tight-binding inhibitor of several G1 cyclin/CDK complexes (cyclin E-CDK2, cyclin D2-CDK4, and cyclin A-CDK2) and, to lesser extent, of the mitotic cyclin B-CDC2. Negative regulator of cell proliferation. May play a role in maintenance of the non-proliferative state throughout life. This Mus musculus (Mouse) protein is Cyclin-dependent kinase inhibitor 1C (Cdkn1c).